We begin with the raw amino-acid sequence, 239 residues long: MGRAYQNRKESMAKTSDMKAKVYSRYGREIYVSAKSGGVDPTANLALRSLIERAKKDQVPGHVIDKALDKAKGGGGEDYSPARYEGYGPGGSMALIECLTDNPNRTFGDVRMAFTKTKCKIGTQGTVSHMFDHVAIFVFAHEDEDAVLEALMDADVDVSEIENDNGMLTVFTPNTEYFKAKQALVEAFGELEFEVDEIQFIPQSYTTISAEDMDMFDKFMAMLNDLDDVQNVYHNVDLG.

Belongs to the TACO1 family.

The protein resides in the cytoplasm. This Alcanivorax borkumensis (strain ATCC 700651 / DSM 11573 / NCIMB 13689 / SK2) protein is Probable transcriptional regulatory protein ABO_1803.